A 366-amino-acid chain; its full sequence is Histidinol-phosphate aminotransferase (366 aa).

Lysine 227 carries the post-translational modification N6-(pyridoxal phosphate)lysine.

This sequence belongs to the class-II pyridoxal-phosphate-dependent aminotransferase family. Histidinol-phosphate aminotransferase subfamily. As to quaternary structure, homodimer. Pyridoxal 5'-phosphate is required as a cofactor.

It catalyses the reaction L-histidinol phosphate + 2-oxoglutarate = 3-(imidazol-4-yl)-2-oxopropyl phosphate + L-glutamate. It functions in the pathway amino-acid biosynthesis; L-histidine biosynthesis; L-histidine from 5-phospho-alpha-D-ribose 1-diphosphate: step 7/9. The protein is Histidinol-phosphate aminotransferase of Campylobacter hominis (strain ATCC BAA-381 / DSM 21671 / CCUG 45161 / LMG 19568 / NCTC 13146 / CH001A).